The chain runs to 156 residues: Protein-export protein SecB (156 aa).

Belongs to the SecB family. In terms of assembly, homotetramer, a dimer of dimers. One homotetramer interacts with 1 SecA dimer.

The protein resides in the cytoplasm. In terms of biological role, one of the proteins required for the normal export of preproteins out of the cell cytoplasm. It is a molecular chaperone that binds to a subset of precursor proteins, maintaining them in a translocation-competent state. It also specifically binds to its receptor SecA. The polypeptide is Protein-export protein SecB (Paraburkholderia phymatum (strain DSM 17167 / CIP 108236 / LMG 21445 / STM815) (Burkholderia phymatum)).